Consider the following 130-residue polypeptide: Small ribosomal subunit protein uS9 (130 aa).

The interval 106 to 130 is disordered; it reads RDSRKVERKKPGLKKARKASQFSKR. Over residues 111 to 130 the composition is skewed to basic residues; the sequence is VERKKPGLKKARKASQFSKR.

It belongs to the universal ribosomal protein uS9 family.

The polypeptide is Small ribosomal subunit protein uS9 (Streptococcus pneumoniae serotype 2 (strain D39 / NCTC 7466)).